The primary structure comprises 145 residues: D-aminoacyl-tRNA deacylase (145 aa).

Positions 137 to 138 (GP) match the Gly-cisPro motif, important for rejection of L-amino acids motif.

The protein belongs to the DTD family. As to quaternary structure, homodimer.

Its subcellular location is the cytoplasm. The enzyme catalyses glycyl-tRNA(Ala) + H2O = tRNA(Ala) + glycine + H(+). The catalysed reaction is a D-aminoacyl-tRNA + H2O = a tRNA + a D-alpha-amino acid + H(+). Its function is as follows. An aminoacyl-tRNA editing enzyme that deacylates mischarged D-aminoacyl-tRNAs. Also deacylates mischarged glycyl-tRNA(Ala), protecting cells against glycine mischarging by AlaRS. Acts via tRNA-based rather than protein-based catalysis; rejects L-amino acids rather than detecting D-amino acids in the active site. By recycling D-aminoacyl-tRNA to D-amino acids and free tRNA molecules, this enzyme counteracts the toxicity associated with the formation of D-aminoacyl-tRNA entities in vivo and helps enforce protein L-homochirality. The chain is D-aminoacyl-tRNA deacylase from Shewanella denitrificans (strain OS217 / ATCC BAA-1090 / DSM 15013).